The chain runs to 369 residues: Methionine import ATP-binding protein MetN 1 (369 aa).

Residues Ile-29–Leu-265 enclose the ABC transporter domain. Gly-62–Ser-69 contributes to the ATP binding site.

The protein belongs to the ABC transporter superfamily. Methionine importer (TC 3.A.1.24) family. The complex is composed of two ATP-binding proteins (MetN), two transmembrane proteins (MetI) and a solute-binding protein (MetQ).

It is found in the cell inner membrane. The enzyme catalyses L-methionine(out) + ATP + H2O = L-methionine(in) + ADP + phosphate + H(+). The catalysed reaction is D-methionine(out) + ATP + H2O = D-methionine(in) + ADP + phosphate + H(+). Functionally, part of the ABC transporter complex MetNIQ involved in methionine import. Responsible for energy coupling to the transport system. The protein is Methionine import ATP-binding protein MetN 1 of Pseudomonas aeruginosa (strain ATCC 15692 / DSM 22644 / CIP 104116 / JCM 14847 / LMG 12228 / 1C / PRS 101 / PAO1).